The sequence spans 236 residues: Chorionic somatomammotropin hormone 1 (236 aa).

The first 36 residues, 1-36, serve as a signal peptide directing secretion; it reads MAPASSHRGHQWICDLVRGSCLLLLLVVSNLLLCQG. Residue Asn89 is glycosylated (N-linked (GlcNAc...) asparagine). 2 cysteine pairs are disulfide-bonded: Cys98/Cys214 and Cys231/Cys236.

This sequence belongs to the somatotropin/prolactin family.

It is found in the secreted. The protein is Chorionic somatomammotropin hormone 1 (CSH1) of Bos taurus (Bovine).